A 351-amino-acid polypeptide reads, in one-letter code: Ion-translocating oxidoreductase complex subunit D (351 aa).

3 helical membrane passes run 37-57, 88-108, and 123-143; these read YFFG…AILA, AIPP…AIVI, and PAMA…TTWL. At T187 the chain carries FMN phosphoryl threonine. A run of 4 helical transmembrane segments spans residues 214–234, 241–261, 270–290, and 300–317; these read FAGL…LFLL, WHIP…FAVF, IFNL…TDPV, and LYYG…RSWG.

Belongs to the NqrB/RnfD family. As to quaternary structure, the complex is composed of six subunits: RnfA, RnfB, RnfC, RnfD, RnfE and RnfG. The cofactor is FMN.

The protein resides in the cell inner membrane. Part of a membrane-bound complex that couples electron transfer with translocation of ions across the membrane. This Aliivibrio salmonicida (strain LFI1238) (Vibrio salmonicida (strain LFI1238)) protein is Ion-translocating oxidoreductase complex subunit D.